The chain runs to 184 residues: MGLLTVLKKLKQKEKELRILMLGLDNAGKTTILKKFNGEDISTISPTLGFNIQTLMYKEYKLNIWDIGGQKTLRSYWRNYYEENDAVIWVIDSSDIRRIDDCKFELKKLLEEEKFAGASFLVFANKQDLDGAMTSEEISKYLDLEQLNTHHWEIMSCSAVTGLGLEEGIDWVVKDIVSRCFVLD.

Gly2 is lipidated: N-myristoyl glycine. Residues 23–30 (GLDNAGKT), 66–70 (DIGGQ), and 125–128 (NKQD) each bind GTP.

Belongs to the small GTPase superfamily. Arf family.

Functionally, may be involved in trafficking events within the endosomal system. This chain is ADP-ribosylation factor-like protein 2 (arl2), found in Dictyostelium discoideum (Social amoeba).